The primary structure comprises 215 residues: Cytochrome b6 (215 aa).

The chain crosses the membrane as a helical span at residues 32-52 (IFYCLGGITLTCFLVQVATGF). Cys35 is a heme c binding site. Positions 86 and 100 each coordinate heme b. 3 consecutive transmembrane segments (helical) span residues 90–110 (ASMMVLMMILHVFRVYLTGGF), 116–136 (LTWVTGVILAVLTASFGVTGY), and 186–206 (LHTFVLPLLTAVFMLMHFSMI). The heme b site is built by His187 and His202.

It belongs to the cytochrome b family. PetB subfamily. The 4 large subunits of the cytochrome b6-f complex are cytochrome b6, subunit IV (17 kDa polypeptide, PetD), cytochrome f and the Rieske protein, while the 4 small subunits are PetG, PetL, PetM and PetN. The complex functions as a dimer. Heme b serves as cofactor. Requires heme c as cofactor.

It localises to the plastid. The protein resides in the chloroplast thylakoid membrane. Component of the cytochrome b6-f complex, which mediates electron transfer between photosystem II (PSII) and photosystem I (PSI), cyclic electron flow around PSI, and state transitions. This is Cytochrome b6 from Piper cenocladum (Ant piper).